The chain runs to 158 residues: Probable cyclic pyranopterin monophosphate synthase (158 aa).

Substrate contacts are provided by residues 78–80 (MCH) and 114–115 (ME). Asp-129 is a catalytic residue.

The protein belongs to the MoaC family. Homohexamer; trimer of dimers.

It catalyses the reaction (8S)-3',8-cyclo-7,8-dihydroguanosine 5'-triphosphate = cyclic pyranopterin phosphate + diphosphate. Its pathway is cofactor biosynthesis; molybdopterin biosynthesis. In terms of biological role, catalyzes the conversion of (8S)-3',8-cyclo-7,8-dihydroguanosine 5'-triphosphate to cyclic pyranopterin monophosphate (cPMP). The polypeptide is Probable cyclic pyranopterin monophosphate synthase (Methanosarcina acetivorans (strain ATCC 35395 / DSM 2834 / JCM 12185 / C2A)).